The primary structure comprises 199 residues: NAD(P)H dehydrogenase (quinone) (199 aa).

The Flavodoxin-like domain occupies Ile-4–Val-190. FMN contacts are provided by residues Ser-10 to Ile-15 and Thr-79 to Phe-81. Tyr-12 is a binding site for NAD(+). Trp-99 provides a ligand contact to substrate. Residue His-134 coordinates FMN.

Belongs to the WrbA family. Requires FMN as cofactor.

It carries out the reaction a quinone + NADH + H(+) = a quinol + NAD(+). It catalyses the reaction a quinone + NADPH + H(+) = a quinol + NADP(+). The sequence is that of NAD(P)H dehydrogenase (quinone) from Photorhabdus laumondii subsp. laumondii (strain DSM 15139 / CIP 105565 / TT01) (Photorhabdus luminescens subsp. laumondii).